Consider the following 149-residue polypeptide: Large ribosomal subunit protein uL13 (149 aa).

Belongs to the universal ribosomal protein uL13 family. In terms of assembly, part of the 50S ribosomal subunit.

Functionally, this protein is one of the early assembly proteins of the 50S ribosomal subunit, although it is not seen to bind rRNA by itself. It is important during the early stages of 50S assembly. The protein is Large ribosomal subunit protein uL13 of Bifidobacterium longum (strain DJO10A).